Here is a 247-residue protein sequence, read N- to C-terminus: Adenosylcobinamide-GDP ribazoletransferase (247 aa).

5 helical membrane passes run 34 to 54, 59 to 79, 113 to 133, 138 to 158, and 194 to 214; these read IITF…VFMV, CGAP…TGGF, GGLA…ELAL, ILAS…LLMY, and VLLP…AIFI.

It belongs to the CobS family. It depends on Mg(2+) as a cofactor.

The protein resides in the cell inner membrane. It carries out the reaction alpha-ribazole + adenosylcob(III)inamide-GDP = adenosylcob(III)alamin + GMP + H(+). It catalyses the reaction alpha-ribazole 5'-phosphate + adenosylcob(III)inamide-GDP = adenosylcob(III)alamin 5'-phosphate + GMP + H(+). It participates in cofactor biosynthesis; adenosylcobalamin biosynthesis; adenosylcobalamin from cob(II)yrinate a,c-diamide: step 7/7. In terms of biological role, joins adenosylcobinamide-GDP and alpha-ribazole to generate adenosylcobalamin (Ado-cobalamin). Also synthesizes adenosylcobalamin 5'-phosphate from adenosylcobinamide-GDP and alpha-ribazole 5'-phosphate. The protein is Adenosylcobinamide-GDP ribazoletransferase of Escherichia coli O157:H7.